We begin with the raw amino-acid sequence, 331 residues long: Olfactory receptor 6B3 (331 aa).

Residues 1–25 (MSGENVTRVGTFILVGFPTAPGLQY) are Extracellular-facing. Asn-5 carries an N-linked (GlcNAc...) asparagine glycan. Residues 26 to 46 (LLFLLFLLTYLFVLVENLAII) traverse the membrane as a helical segment. Residues 47 to 54 (LTVWSSTS) lie on the Cytoplasmic side of the membrane. A helical membrane pass occupies residues 55 to 75 (LHRPMYYFLSSMSFLEIWYVS). At 76 to 99 (DITPKMLEGFLLQQKRISFVGCMT) the chain is on the extracellular side. A disulfide bridge connects residues Cys-97 and Cys-189. Residues 100–120 (QLYFFSSLVCTECVLLASMAY) traverse the membrane as a helical segment. At 121–139 (DRYVAICHPLRYHVLVTPG) the chain is on the cytoplasmic side. A helical membrane pass occupies residues 140-160 (LCLQLVGFSFVSGFTISMIKV). Topologically, residues 161-196 (CFISSVTFCGSNVLNHFFCDISPILKLACTDFSTAE) are extracellular. The helical transmembrane segment at 197–217 (LVDFILAFIILVFPLLATMLS) threads the bilayer. At 218-237 (YAHITLAVLRIPSATGCWRA) the chain is on the cytoplasmic side. Residues 238-258 (FFTCASHLTVVTVFYTALLFM) form a helical membrane-spanning segment. Residues 259-271 (YVRPQAIDSRSSN) lie on the Extracellular side of the membrane. The helical transmembrane segment at 272-292 (KLISVLYTVITPILNPLIYCL) threads the bilayer. The Cytoplasmic segment spans residues 293–331 (RNKEFKNALKKAFGLTSCAVEGRLSSLLELHLQIHSQPL).

It belongs to the G-protein coupled receptor 1 family.

It is found in the cell membrane. In terms of biological role, odorant receptor. This is Olfactory receptor 6B3 (OR6B3) from Homo sapiens (Human).